Here is a 722-residue protein sequence, read N- to C-terminus: NCK-interacting protein with SH3 domain (722 aa).

The SH3 domain occupies 1-58; it reads MYRALYAFRSAEPNALAFAAGETFLVLERSSAHWWLAARARSGETGYVPPAYLRRLQG. 2 disordered regions span residues 101 to 122 and 149 to 286; these read KETLSRRGPSASSVAVMTSSTS and PSSE…ASDD. Over residues 110–121 the composition is skewed to low complexity; the sequence is SASSVAVMTSST. S120 is modified (phosphoserine). Residues 169-185 are compositionally biased toward pro residues; sequence QIPPQPRRAAPTTPPPP. Residues 175 to 192 carry the Nuclear localization signal motif; that stretch reads RRAAPTTPPPPVKRRDRE. Position 181 is a phosphothreonine (T181). The segment covering 206–240 has biased composition (low complexity); it reads PSGGNSVSSGSSVSSTSLDTLYTSSSPSEPGSSCS. The residue at position 294 (S294) is a Phosphoserine.

As to quaternary structure, associates with the intermediate filaments, vimentin and desmin. Binds the first and third SH3 domains of NCK. Binds the proline-rich domains of N-WASP through its SH3 domain. Similarly, binds diaphanous protein homolog 1 (DRF1). Binds the SH3 domains of GRB2 through its proline-rich domains. Interacts with Helicobacter pylori toxin vacA. Isoform 4 interacts with FHOD1. Interacts with FASLG. Interacts with TMIGD2. As to expression, highest expression in heart, brain, skeletal muscle, kidney and liver. Lower levels in placenta, lung, small intestine and leukocytes. Weak expression in colon, thymus and spleen.

It localises to the nucleus. Its function is as follows. Has an important role in stress fiber formation induced by active diaphanous protein homolog 1 (DRF1). Induces microspike formation, in vivo. In vitro, stimulates N-WASP-induced ARP2/3 complex activation in the absence of CDC42. May play an important role in the maintenance of sarcomeres and/or in the assembly of myofibrils into sarcomeres. Implicated in regulation of actin polymerization and cell adhesion. Plays a role in angiogenesis. This is NCK-interacting protein with SH3 domain (NCKIPSD) from Homo sapiens (Human).